Consider the following 338-residue polypeptide: Porphobilinogen deaminase (338 aa).

S-(dipyrrolylmethanemethyl)cysteine is present on Cys265.

It belongs to the HMBS family. It depends on dipyrromethane as a cofactor.

It catalyses the reaction 4 porphobilinogen + H2O = hydroxymethylbilane + 4 NH4(+). The protein operates within porphyrin-containing compound metabolism; protoporphyrin-IX biosynthesis; coproporphyrinogen-III from 5-aminolevulinate: step 2/4. Its function is as follows. Tetrapolymerization of the monopyrrole PBG into the hydroxymethylbilane pre-uroporphyrinogen in several discrete steps. This is Porphobilinogen deaminase (HEM3) from Yarrowia lipolytica (strain CLIB 122 / E 150) (Yeast).